Reading from the N-terminus, the 1121-residue chain is Phosphatidylinositol 4-kinase beta 1 (1121 aa).

Residues 1-143 (MPMGRFLSLV…SRIQEKCQIA (143 aa)) enclose the PIK helical domain. Over residues 187–207 (PPTQKSLSFSPSPGTNVQDDG) the composition is skewed to polar residues. Residues 187-210 (PPTQKSLSFSPSPGTNVQDDGSQL) form a disordered region. 9 tandem repeats follow at residues 212-231 (AEDN…RDAL), 244-263 (SEKE…EGDE), 266-285 (PNSE…EDED), 288-306 (NSSE…ESEE), 309-328 (SSSD…DEEE), 331-350 (ANSD…EDEE), 353-372 (PNSE…EDDK), 380-398 (EDKD…DDKR), and 420-438 (DERE…DDKK). Residues 212-508 (AEDNKIFKKL…FRDRDQSVED (297 aa)) are 11 X 20 AA approximate repeats (PPC). Disordered stretches follow at residues 343-421 (ESKN…EEDE), 435-489 (DDKK…ESSP), 506-544 (VEDS…NTAS), and 794-825 (AAAA…NGGM). Composition is skewed to basic and acidic residues over residues 358–376 (FFKK…VPKE), 383–405 (DGFL…EKNE), 412–421 (ADKKSGEEDE), and 435–445 (DDKKDIVKVDD). The span at 446-455 (GNESEGDESP) shows a compositional bias: acidic residues. A phosphoserine mark is found at serine 449 and serine 454. A run of 2 repeats spans residues 454-472 (SPEF…EDAK) and 489-508 (PGTE…SVED). A compositionally biased stretch (basic and acidic residues) spans 466–475 (IHPEDAKPTS). Polar residues predominate over residues 476-489 (ENENSSNGLVESSP). Residues 835–1106 (ELWEGKRDRI…LISSSLDAWR (272 aa)) enclose the PI3K/PI4K catalytic domain. A G-loop region spans residues 841 to 847 (RDRIRKA). The interval 969–977 (QVKDRHNGN) is catalytic loop. The interval 988–1012 (HIDFGFMLSNSPGGVNFESAPFKLT) is activation loop.

It belongs to the PI3/PI4-kinase family. Type III PI4K subfamily. In terms of assembly, interacts with AHK2, CBL1 and RABA4D. In terms of tissue distribution, expressed constitutively in leaves, roots, flowers, and stems.

The protein localises to the cell membrane. It localises to the golgi apparatus. Its subcellular location is the trans-Golgi network. It is found in the cytoplasmic vesicle membrane. It carries out the reaction a 1,2-diacyl-sn-glycero-3-phospho-(1D-myo-inositol) + ATP = a 1,2-diacyl-sn-glycero-3-phospho-(1D-myo-inositol 4-phosphate) + ADP + H(+). Stimulated by phosphatidylinositol 4-phosphate (PtdIns4P). Slightly repressed by phosphatidyl-choline (PtdCho), wortmannin and adenosine. Its function is as follows. Acts on phosphatidylinositol (PtdIns) in the first committed step in the production of the second messenger inositol-1,4,5-trisphosphate. Necessary for proper organization of the trans-Golgi network (TGN) and post-Golgi secretion in root hairs. Together with PI4KB2, required during polarized root hair expansion and pollen tube elongation. Functions redundantly with PI4KB2 upstream of the cold response phosphoinositide-dependent phospholipase C (PI-PLC) pathway. The chain is Phosphatidylinositol 4-kinase beta 1 from Arabidopsis thaliana (Mouse-ear cress).